Here is a 696-residue protein sequence, read N- to C-terminus: Spindle assembly checkpoint component MAD1 (696 aa).

Disordered stretches follow at residues 1 to 22 (MSTG…SINN) and 394 to 415 (QIHA…TENK). Residues 402-413 (KQQEQEKEENTE) show a composition bias toward basic and acidic residues.

The protein belongs to the MAD1 family. As to quaternary structure, component of the mitotic checkpoint complex (MCC).

The protein localises to the nucleus. Functionally, central component of the spindle assembly checkpoint which is a feedback control that prevents cells with incompletely assembled spindles from leaving mitosis. This chain is Spindle assembly checkpoint component MAD1, found in Candida albicans (strain SC5314 / ATCC MYA-2876) (Yeast).